The primary structure comprises 339 residues: Ribosomal RNA large subunit methyltransferase M (339 aa).

Residues Ser-176, 206 to 209, Asp-225, Asp-245, and Asp-261 each bind S-adenosyl-L-methionine; that span reads APGG. Lys-290 functions as the Proton acceptor in the catalytic mechanism.

This sequence belongs to the class I-like SAM-binding methyltransferase superfamily. RNA methyltransferase RlmE family. RlmM subfamily. As to quaternary structure, monomer.

Its subcellular location is the cytoplasm. The catalysed reaction is cytidine(2498) in 23S rRNA + S-adenosyl-L-methionine = 2'-O-methylcytidine(2498) in 23S rRNA + S-adenosyl-L-homocysteine + H(+). Catalyzes the 2'-O-methylation at nucleotide C2498 in 23S rRNA. The chain is Ribosomal RNA large subunit methyltransferase M from Halorhodospira halophila (strain DSM 244 / SL1) (Ectothiorhodospira halophila (strain DSM 244 / SL1)).